Consider the following 973-residue polypeptide: Short transient receptor potential channel 5 (973 aa).

The Cytoplasmic segment spans residues 1–325; sequence MAQLYYKKVN…YDGFPGWRRK (325 aa). ANK repeat units follow at residues 30 to 60, 69 to 97, 98 to 124, and 141 to 170; these read SAEEKAFLNAVEKGDYATVKQALQEAEIYYN, LGRSALLIAIENENLEIMELLLNHSVYVG, DALLYAIRKEVVGAVELLLSYRRPSGE, and PDITPIMLAAHTNNYEIIKLLVQKRVTIPR. The Zn(2+) site is built by His-172, Cys-176, Cys-178, and Cys-181. An intramembrane region (discontinuously helical) is located at residues 326–360; the sequence is HWVVKLLTCMTIGFLFPMLSIAYLISPRSNLGLFI. The Cytoplasmic portion of the chain corresponds to 361–363; the sequence is KKP. A helical membrane pass occupies residues 364–384; the sequence is FIKFICHTASYLTFLFMLLLA. The Extracellular portion of the chain corresponds to 385 to 404; the sequence is SQHIVRTDLHVQGPPPTVVE. The helical transmembrane segment at 405–419 threads the bilayer; sequence WMILPWVLGFIWGEI. Ca(2+) contacts are provided by Glu-418, Glu-421, Asn-436, and Asp-439. Residues 420 to 433 lie on the Cytoplasmic side of the membrane; sequence KEMWDGGFTEYIHD. A helical membrane pass occupies residues 434 to 454; sequence WWNLMDFAMNSLYLATISLKI. Over 455-476 the chain is Extracellular; it reads VAYVKYNGSRPREEWEMWHPTL. Asn-461 carries an N-linked (GlcNAc...) asparagine glycan. A helical membrane pass occupies residues 477-497; it reads IAEALFAISNILSSLRLISLF. Residues 498 to 512 are Cytoplasmic-facing; sequence TANSHLGPLQISLGR. The helical transmembrane segment at 513–535 threads the bilayer; that stretch reads MLLDILKFLFIYCLVLLAFANGL. At 536–603 the chain is on the extracellular side; it reads NQLYFYYETR…HEFTEFVGAT (68 aa). The cysteines at positions 553 and 558 are disulfide-linked. The helical transmembrane segment at 604–624 threads the bilayer; it reads MFGTYNVISLVVLLNMLIAMM. The Cytoplasmic segment spans residues 625 to 973; sequence NNSYQLIADH…GQEEQVTTRL (349 aa). Disordered stretches follow at residues 766–794 and 810–837; these read HPRSFSTSSTELSQRDDNNDGSGGARAKS and GPPLIRTMPRSSGAQGKSKAESSSKRSF. The segment at 971 to 973 is essential for binding to NHERF1 PDZ domain; it reads TRL.

Belongs to the transient receptor (TC 1.A.4) family. STrpC subfamily. TRPC5 sub-subfamily. As to quaternary structure, homotetramer. Heterotetramer with TRPC1 and/or TRPC4. Each subunit in the homomeric ion channel (via ANK repeats) interacts with one copy of GTP-bound GNAI3; the interaction is direct and activates the ion channel. Interacts with TRPC4AP. Interacts with NHERF1. Interacts with MX1 and RNF24. Interacts (via C-terminus) with CABP1. Interacts with SESTD1 (via the spectrin 1 repeat). Interacts with PLSCR1. Interacts with PKD2L2. Expressed in brain with higher levels in fetal brain. Found in cerebellum and occipital pole.

Its subcellular location is the cell membrane. The catalysed reaction is Ca(2+)(in) = Ca(2+)(out). Activated by G-protein coupled receptors via direct interaction with GTP-bound GNAI3, which increases the channel sensitivity to phosphatidylinositol bisphosphate. May be activated by intracellular calcium store depletion. Calcium channel activity is enhanced by MYLK, that promotes its subcellular localization at the plasma membrane. Forms a receptor-activated non-selective calcium permeant cation channel. Mediates calcium-dependent phosphatidylserine externalization and apoptosis in neurons via its association with PLSCR1. Acts on distinct neuronal populations in the hypothalamus to regulate innate behaviors including feeding, anxiety (flight/fight/fear), socialization, and maternal care. In Homo sapiens (Human), this protein is Short transient receptor potential channel 5 (TRPC5).